A 391-amino-acid polypeptide reads, in one-letter code: Probable sugar efflux transporter (391 aa).

A run of 12 helical transmembrane segments spans residues 16–36, 51–71, 82–102, 110–130, 138–158, 170–190, 210–230, 247–267, 277–297, 300–320, 338–358, and 361–381; these read VFVFSLSAFIFNTTEFVPVAL, VGLMITAYAWVVSLGSLPLML, LLFLFALFILSHILSALAWNF, MGIAFTHSIFWSITASLVIRV, QALGLLALGSSLAMILGLPLG, TFGVIGGVATLIALLMWKLLP, PLLMGIYLLVIMVISGHFTTY, ITTLMLFVFGLAGVAGSFLFS, FIAFAMVLVICPQLLLFVFKN, WVIFLQIFLWGIGITSLTIAL, IFSGSYNVGIGSGALFGSIVI, and LGLEYIGFVGGALGLLALFWL.

The protein belongs to the major facilitator superfamily. SotB (TC 2.A.1.2) family.

Its subcellular location is the cell inner membrane. Functionally, involved in the efflux of sugars. The physiological role may be the reduction of the intracellular concentration of toxic sugars or sugar metabolites. This chain is Probable sugar efflux transporter, found in Helicobacter pylori (strain HPAG1).